Consider the following 471-residue polypeptide: 6-phosphofructo-2-kinase/fructose-2,6-bisphosphatase 1 (471 aa).

An N-acetylserine modification is found at Ser2. A 6-phosphofructo-2-kinase region spans residues 2-250 (SREMGELTQT…AYYLMNIHVT (249 aa)). Residue Ser33 is modified to Phosphoserine; by PKA. 49–57 (GLPARGKTY) provides a ligand contact to ATP. Positions 82 and 105 each coordinate beta-D-fructose 6-phosphate. Asp131 is a catalytic residue. Residues Thr133 and Arg139 each contribute to the beta-D-fructose 6-phosphate site. At Ser141 the chain carries Phosphoserine. Cys161 is a catalytic residue. ATP is bound at residue 170–175 (NIKQVK). Beta-D-fructose 6-phosphate contacts are provided by Lys175, Arg196, and Tyr200. A fructose-2,6-bisphosphatase region spans residues 251–471 (PRSIYLCRHG…EALDTVPAHY (221 aa)). Arg258 provides a ligand contact to beta-D-fructose 2,6-bisphosphate. His259 serves as the catalytic Tele-phosphohistidine intermediate. Asn265, Gly271, and Arg308 together coordinate beta-D-fructose 2,6-bisphosphate. Glu328 acts as the Proton donor/acceptor in catalysis. The beta-D-fructose 2,6-bisphosphate site is built by Tyr339, Arg353, Lys357, Tyr368, Gln394, and Arg398. 350–353 (FALR) serves as a coordination point for ATP. ATP-binding positions include 394–398 (QAVMR) and Tyr430.

It in the C-terminal section; belongs to the phosphoglycerate mutase family. In terms of assembly, homodimer. Liver.

It carries out the reaction beta-D-fructose 2,6-bisphosphate + H2O = beta-D-fructose 6-phosphate + phosphate. It catalyses the reaction beta-D-fructose 6-phosphate + ATP = beta-D-fructose 2,6-bisphosphate + ADP + H(+). Phosphorylation at Ser-33 inhibits the kinase and activates the bisphosphatase. Synthesis and degradation of fructose 2,6-bisphosphate. The chain is 6-phosphofructo-2-kinase/fructose-2,6-bisphosphatase 1 from Mus musculus (Mouse).